The sequence spans 488 residues: Catalase (488 aa).

The segment at 1–24 (MTERKNLTTNQGTPVGDNQNSMTA) is disordered. The segment covering 7–23 (LTTNQGTPVGDNQNSMT) has biased composition (polar residues). Residues His-55 and Asn-128 contribute to the active site. Heme is bound at residue Tyr-338.

It belongs to the catalase family. Heme is required as a cofactor.

It localises to the cytoplasm. The enzyme catalyses 2 H2O2 = O2 + 2 H2O. In terms of biological role, decomposes hydrogen peroxide into water and oxygen; serves to protect cells from the toxic effects of hydrogen peroxide. In Listeria innocua serovar 6a (strain ATCC BAA-680 / CLIP 11262), this protein is Catalase (kat).